Consider the following 451-residue polypeptide: uncharacterized protein (451 aa).

Residues 415–435 (AHGDTEWLPPPHLDHGQPRVN) form a disordered region.

This sequence belongs to the Rv1128c/1148c/1588c/1702c/1945/3466 family.

This is an uncharacterized protein from Mycobacterium tuberculosis (strain ATCC 25618 / H37Rv).